The primary structure comprises 970 residues: Glycine dehydrogenase (decarboxylating) (970 aa).

Lysine 723 carries the post-translational modification N6-(pyridoxal phosphate)lysine.

This sequence belongs to the GcvP family. As to quaternary structure, the glycine cleavage system is composed of four proteins: P, T, L and H. Pyridoxal 5'-phosphate serves as cofactor.

It carries out the reaction N(6)-[(R)-lipoyl]-L-lysyl-[glycine-cleavage complex H protein] + glycine + H(+) = N(6)-[(R)-S(8)-aminomethyldihydrolipoyl]-L-lysyl-[glycine-cleavage complex H protein] + CO2. Functionally, the glycine cleavage system catalyzes the degradation of glycine. The P protein binds the alpha-amino group of glycine through its pyridoxal phosphate cofactor; CO(2) is released and the remaining methylamine moiety is then transferred to the lipoamide cofactor of the H protein. The sequence is that of Glycine dehydrogenase (decarboxylating) from Burkholderia pseudomallei (strain 1106a).